The following is a 291-amino-acid chain: Homeobox protein knotted-1-like 7 (291 aa).

The region spanning 194-214 (ELKLELKQGFKSRIEDVREEI) is the ELK domain. Positions 215–278 (MRKRRAGKLP…NQRKRNWHNN (64 aa)) form a DNA-binding region, homeobox; TALE-type.

The protein belongs to the TALE/KNOX homeobox family. May form heterodimeric complex with the TALE/BELL proteins. Interacts with OFP1, OFP2, OFP3, OFP4 and OFP6.

The protein localises to the nucleus. Its function is as follows. May be involved in secondary cell wall biosynthesis. The polypeptide is Homeobox protein knotted-1-like 7 (KNAT7) (Arabidopsis thaliana (Mouse-ear cress)).